Here is a 316-residue protein sequence, read N- to C-terminus: Ornithine carbamoyltransferase (316 aa).

Carbamoyl phosphate contacts are provided by residues 57–60 (STRT), Gln-84, Arg-108, and 135–138 (HPCQ). L-ornithine is bound by residues Asn-166, Asp-230, and 234–235 (SM). Carbamoyl phosphate-binding positions include 269-270 (CL) and Arg-297.

It belongs to the aspartate/ornithine carbamoyltransferase superfamily. OTCase family.

The protein localises to the cytoplasm. The enzyme catalyses carbamoyl phosphate + L-ornithine = L-citrulline + phosphate + H(+). It participates in amino-acid biosynthesis; L-arginine biosynthesis; L-arginine from L-ornithine and carbamoyl phosphate: step 1/3. Functionally, reversibly catalyzes the transfer of the carbamoyl group from carbamoyl phosphate (CP) to the N(epsilon) atom of ornithine (ORN) to produce L-citrulline. This is Ornithine carbamoyltransferase (argF) from Bacillus cereus (strain ATCC 14579 / DSM 31 / CCUG 7414 / JCM 2152 / NBRC 15305 / NCIMB 9373 / NCTC 2599 / NRRL B-3711).